The sequence spans 1285 residues: Peroxidasin homolog pxn-1 (1285 aa).

The signal sequence occupies residues 1–20 (MNLYLLLLVIATSSWQFVAG). Residues 21–53 (LECPVECTCDKKGLVVDCSSSGLTRIPKNISRN) enclose the LRRNT domain. LRR repeat units lie at residues 27–49 (CTCD…IPKN), 50–72 (ISRN…RSDL), 73–96 (EGFN…ENVL), 97–120 (DHLP…PLCS), 122–143 (SRPL…EQVL), 145–168 (YFPD…KLFD), and 204–227 (KVYC…SALT). N-linked (GlcNAc...) asparagine glycosylation is present at Asn49. The 49-residue stretch at 180–228 (SNPWHCDCRASKVKALLQKVKWEKKVYCTNPVELRHQALDEVDDSALTC) folds into the LRRCT domain. N-linked (GlcNAc...) asparagine glycosylation occurs at Asn248. Residues 305–324 (RQSQHQGNGSPQFTYKPRDN) form a disordered region. Polar residues predominate over residues 307-317 (SQHQGNGSPQF). Ig-like C2-type domains are found at residues 315 to 401 (PQFT…FSLD) and 408 to 495 (PNIY…AKLT). 2 cysteine pairs are disulfide-bonded: Cys336–Cys385 and Cys429–Cys479. Positions 508-550 (QIDEELLRAIAQKARQNVENAVEKTRKQLTQDKVTNTNDLKRL) form a coiled coil. Asn595 is a glycosylation site (N-linked (GlcNAc...) asparagine). Cysteines 625 and 641 form a disulfide. Asp719 contributes to the heme b binding site. Catalysis depends on His720, which acts as the Proton acceptor. Ca(2+) is bound at residue Asp721. Disulfide bonds link Cys740–Cys750 and Cys744–Cys771. Asn741 carries an N-linked (GlcNAc...) asparagine glycan. Residues Thr803, Phe805, Asp807, and Ser809 each contribute to the Ca(2+) site. Asn858 is a glycosylation site (N-linked (GlcNAc...) asparagine). Positions 877 and 973 each coordinate heme b. LRR repeat units lie at residues 998–1022 (HKAF…GLFA) and 1049–1073 (VSLD…TEYR). 2 cysteine pairs are disulfide-bonded: Cys1076-Cys1133 and Cys1174-Cys1201. One copy of the LRR 12 repeat lies at 1168 to 1189 (TLARLFCDNGDNIDRIQKDVFM).

The protein belongs to the peroxidase family. XPO subfamily. Ca(2+) is required as a cofactor. Requires heme b as cofactor. In terms of tissue distribution, expressed in the ventral nerve cord, the dorsal nerve cord, head neurons, GABAergic and cholinergic neurons, body wall muscles, vulval muscles, uterine muscles, intestine, the hypodermis and in coelomocytes.

The protein localises to the secreted. The protein resides in the extracellular space. It is found in the extracellular matrix. It carries out the reaction L-lysyl-[collagen] + L-methionyl-[collagen] + H2O2 = [collagen]-L-lysyl-N-S-L-methionyl-[collagen] + 2 H2O + H(+). It catalyses the reaction bromide + H2O2 = hypobromite + H2O. The enzyme catalyses L-lysyl-[collagen] + L-methionyl-[collagen] + hypobromite = [collagen]-L-lysyl-N-S-L-methionyl-[collagen] + bromide + H2O + H(+). The catalysed reaction is L-tyrosyl-[protein] + bromide + H2O2 + H(+) = 3-bromo-L-tyrosyl-[protein] + 2 H2O. It carries out the reaction hypobromite + L-tyrosyl-[protein] + H(+) = 3-bromo-L-tyrosyl-[protein] + H2O. Functionally, catalyzes the two-electron oxidation of bromide by hydrogen peroxide and generates hypobromite as a reactive intermediate which mediates the formation of sulfilimine cross-links between methionine and hydroxylysine residues within an uncross-linked collagen IV NC1 hexamer. Plays a role in the attachment of tissues and in axonal guidance during early developmental stages. May functionally antagonize the peroxidasin pxn-2 to maintain neuronal development. The protein is Peroxidasin homolog pxn-1 of Caenorhabditis elegans.